A 265-amino-acid polypeptide reads, in one-letter code: MARVFESDSGSGCSNVLSLDLIRESLIRQEDTIVFSLIERAKFPLNSPAFEESRCLDSGSFSSLTEFFVRETEIIQAKVGRYEYPEENPFFLENIPHSVFPTHKYPSALHPKALSVNINKQIWDIYFKELLPLFVKPGDDGNYPSTAASDLACLQALSRRIHYGKFVAEVKFRDAPQDYEPAIRAQDREALMKLLTFEKVEEMVKKRVQKKAETFGQEVKFNSGYGDESKKKYKVDPLLASRIYGEWLIPLTKLVEVEYLLRRLD.

A Chorismate mutase domain is found at 10 to 265 (GSGCSNVLSL…EVEYLLRRLD (256 aa)).

In terms of assembly, homodimer. As to expression, expressed in roots, stems, cauline leaves and flowers, and at lower levels in rosette leaves and siliques.

Its subcellular location is the cytoplasm. The protein localises to the cytosol. It carries out the reaction chorismate = prephenate. The protein operates within metabolic intermediate biosynthesis; prephenate biosynthesis; prephenate from chorismate: step 1/1. Its activity is regulated as follows. No allosteric regulation. In Arabidopsis thaliana (Mouse-ear cress), this protein is Chorismate mutase 2.